The sequence spans 427 residues: UDP-N-acetylglucosamine 1-carboxyvinyltransferase 1 (427 aa).

Residue 23-24 (KN) participates in phosphoenolpyruvate binding. Arginine 96 serves as a coordination point for UDP-N-acetyl-alpha-D-glucosamine. Residue cysteine 120 is the Proton donor of the active site. Position 120 is a 2-(S-cysteinyl)pyruvic acid O-phosphothioketal (cysteine 120). UDP-N-acetyl-alpha-D-glucosamine contacts are provided by residues 125 to 129 (RPIDL), aspartate 309, and valine 331.

This sequence belongs to the EPSP synthase family. MurA subfamily.

It is found in the cytoplasm. It carries out the reaction phosphoenolpyruvate + UDP-N-acetyl-alpha-D-glucosamine = UDP-N-acetyl-3-O-(1-carboxyvinyl)-alpha-D-glucosamine + phosphate. It participates in cell wall biogenesis; peptidoglycan biosynthesis. Cell wall formation. Adds enolpyruvyl to UDP-N-acetylglucosamine. The sequence is that of UDP-N-acetylglucosamine 1-carboxyvinyltransferase 1 from Streptococcus pneumoniae (strain ATCC BAA-255 / R6).